The primary structure comprises 150 residues: Cytosine deaminase (150 aa).

Residues 3 to 121 (FDDKKGLQVA…KLLIENGVEV (119 aa)) form the CMP/dCMP-type deaminase domain. Substrate is bound at residue asparagine 44. Histidine 55 contributes to the Zn(2+) binding site. Glutamate 57 serves as the catalytic Proton donor. Residues cysteine 84 and cysteine 87 each coordinate Zn(2+). Position 147 (aspartate 147) interacts with substrate.

The protein belongs to the cytidine and deoxycytidylate deaminase family. Homodimer. Zn(2+) is required as a cofactor.

It localises to the cytoplasm. The protein resides in the nucleus. The enzyme catalyses cytosine + H2O + H(+) = uracil + NH4(+). Its pathway is pyrimidine metabolism; UMP biosynthesis via salvage pathway; uracil from cytosine: step 1/1. Catalyzes the hydrolytic deamination of cytosine to uracil or 5-methylcytosine to thymine. Is involved in the pyrimidine salvage pathway, which allows the cell to utilize cytosine for pyrimidine nucleotide synthesis. The chain is Cytosine deaminase from Candida albicans (strain SC5314 / ATCC MYA-2876) (Yeast).